The sequence spans 122 residues: Large ribosomal subunit protein uL14 (122 aa).

Belongs to the universal ribosomal protein uL14 family. Part of the 50S ribosomal subunit. Forms a cluster with proteins L3 and L19. In the 70S ribosome, L14 and L19 interact and together make contacts with the 16S rRNA in bridges B5 and B8.

In terms of biological role, binds to 23S rRNA. Forms part of two intersubunit bridges in the 70S ribosome. This chain is Large ribosomal subunit protein uL14, found in Micrococcus luteus (Micrococcus lysodeikticus).